We begin with the raw amino-acid sequence, 359 residues long: Beta-1,3-galactosyltransferase bre-2 (359 aa).

Residues 1–11 (MRQSRRASSRV) lie on the Cytoplasmic side of the membrane. Residues 12–29 (NRLVVIFIIVASGFLLLY) form a helical; Signal-anchor for type II membrane protein membrane-spanning segment. The Lumenal segment spans residues 30 to 359 (KNTQQFTQID…NPDLEELKEK (330 aa)). N-linked (GlcNAc...) asparagine glycosylation is found at Asn73, Asn163, and Asn209.

It belongs to the glycosyltransferase 31 family.

The protein resides in the golgi apparatus membrane. Its pathway is protein modification; protein glycosylation. Transfers N-acetylgalactosamine onto carbohydrate substrates. Involved in susceptibility to pore-forming crystal toxins in conjunction with bre-1, bre-3, bre-4, and bre-5. Involved in resistance to the nematotoxic C.cinerea galectin Cgl2. The chain is Beta-1,3-galactosyltransferase bre-2 from Caenorhabditis elegans.